A 185-amino-acid chain; its full sequence is Ribosome-recycling factor (185 aa).

Belongs to the RRF family.

The protein localises to the cytoplasm. In terms of biological role, responsible for the release of ribosomes from messenger RNA at the termination of protein biosynthesis. May increase the efficiency of translation by recycling ribosomes from one round of translation to another. This Mycolicibacterium vanbaalenii (strain DSM 7251 / JCM 13017 / BCRC 16820 / KCTC 9966 / NRRL B-24157 / PYR-1) (Mycobacterium vanbaalenii) protein is Ribosome-recycling factor.